Consider the following 299-residue polypeptide: Ficolin-3 (299 aa).

Residues 1-23 (MDLLWILPSLWLLLLGGPACLKT) form the signal peptide. Positions 44 to 81 (PSCPGAPGSPGEKGAPGPQGPPGPPGKMGPKGEPGDPV) are disordered. The Collagen-like domain occupies 48-80 (GAPGSPGEKGAPGPQGPPGPPGKMGPKGEPGDP). Proline 50, proline 53, proline 59, proline 65, proline 68, and proline 77 each carry hydroxyproline. A compositionally biased stretch (pro residues) spans 61–70 (PQGPPGPPGK). The region spanning 84–299 (LRCQEGPRNC…PYRRVRMMLR (216 aa)) is the Fibrinogen C-terminal domain. 2 disulfides stabilise this stretch: cysteine 86–cysteine 110 and cysteine 93–cysteine 121. An N-linked (GlcNAc...) (complex) asparagine glycan is attached at asparagine 189. 4 residues coordinate Ca(2+): aspartate 237, aspartate 239, serine 241, and serine 243. Cysteine 245 and cysteine 258 are disulfide-bonded. 258–259 (CY) lines the a carbohydrate pocket.

The protein belongs to the ficolin lectin family. In terms of assembly, homotrimer. May form an octadecamer consisting of an elementary trimer unit. Does not interact with fibronectin, elastin or zymosan. Interacts with MASP1 and MASP2. Post-translationally, the N-terminus is blocked. In terms of tissue distribution, liver and lung. In liver it is produced by bile duct epithelial cells and hepatocytes. In lung it is produced by both ciliated bronchial epithelial cells and type II alveolar epithelial cells.

The protein localises to the secreted. May function in innate immunity through activation of the lectin complement pathway. Calcium-dependent and GlcNAc-binding lectin. Has affinity with GalNAc, GlcNAc, D-fucose, as mono/oligosaccharide and lipopolysaccharides from S.typhimurium and S.minnesota. The chain is Ficolin-3 (FCN3) from Homo sapiens (Human).